The sequence spans 576 residues: Arginine--tRNA ligase (576 aa).

Positions 122 to 132 (PNVAKEMHVGH) match the 'HIGH' region motif.

Belongs to the class-I aminoacyl-tRNA synthetase family. In terms of assembly, monomer.

Its subcellular location is the cytoplasm. The catalysed reaction is tRNA(Arg) + L-arginine + ATP = L-arginyl-tRNA(Arg) + AMP + diphosphate. The polypeptide is Arginine--tRNA ligase (Pectobacterium atrosepticum (strain SCRI 1043 / ATCC BAA-672) (Erwinia carotovora subsp. atroseptica)).